The primary structure comprises 832 residues: Protein P (832 aa).

The tract at residues 1-177 (MPLSYQHFRK…FCGSPYSWEQ (177 aa)) is terminal protein domain (TP). Residues 178-335 (ELQHGAESFH…YCLSHIVNLL (158 aa)) are spacer. The span at 186 to 206 (FHQQSSGILSRPSVGSSLQSK) shows a compositional bias: polar residues. Disordered regions lie at residues 186–255 (FHQQ…GHNA) and 280–305 (TSEN…RSQS). Positions 210–220 (SRLGLQSQQGH) are enriched in low complexity. Residues 336 to 679 (EDWGPCAEHG…YLNLYPVARQ (344 aa)) are polymerase/reverse transcriptase domain (RT). In terms of domain architecture, Reverse transcriptase spans 346–589 (EHHIRIPRTP…YSLNFMGYVI (244 aa)). Residues Asp-418, Asp-540, and Asp-541 each coordinate Mg(2+).

The protein belongs to the hepadnaviridae P protein family.

The enzyme catalyses DNA(n) + a 2'-deoxyribonucleoside 5'-triphosphate = DNA(n+1) + diphosphate. The catalysed reaction is Endonucleolytic cleavage to 5'-phosphomonoester.. With respect to regulation, activated by host HSP70 and HSP40 in vitro to be able to bind the epsilon loop of the pgRNA. Because deletion of the RNase H region renders the protein partly chaperone-independent, the chaperones may be needed indirectly to relieve occlusion of the RNA-binding site by this domain. Inhibited by several reverse-transcriptase inhibitors: Lamivudine, Adefovir and Entecavir. In terms of biological role, multifunctional enzyme that converts the viral RNA genome into dsDNA in viral cytoplasmic capsids. This enzyme displays a DNA polymerase activity that can copy either DNA or RNA templates, and a ribonuclease H (RNase H) activity that cleaves the RNA strand of RNA-DNA heteroduplexes in a partially processive 3'- to 5'-endonucleasic mode. Neo-synthesized pregenomic RNA (pgRNA) are encapsidated together with the P protein, and reverse-transcribed inside the nucleocapsid. Initiation of reverse-transcription occurs first by binding the epsilon loop on the pgRNA genome, and is initiated by protein priming, thereby the 5'-end of (-)DNA is covalently linked to P protein. Partial (+)DNA is synthesized from the (-)DNA template and generates the relaxed circular DNA (RC-DNA) genome. After budding and infection, the RC-DNA migrates in the nucleus, and is converted into a plasmid-like covalently closed circular DNA (cccDNA). The activity of P protein does not seem to be necessary for cccDNA generation, and is presumably released from (+)DNA by host nuclear DNA repair machinery. The protein is Protein P of Hepatitis B virus genotype D subtype ayw (isolate Australia/AustKW/1991) (HBV-D).